Here is a 303-residue protein sequence, read N- to C-terminus: D-alanine--D-alanine ligase (303 aa).

The ATP-grasp domain occupies Thr99 to Lys293. Residue Gly125–Thr176 participates in ATP binding. Mg(2+) contacts are provided by Asp248, Glu260, and Asn262.

It belongs to the D-alanine--D-alanine ligase family. Requires Mg(2+) as cofactor. Mn(2+) is required as a cofactor.

The protein localises to the cytoplasm. The catalysed reaction is 2 D-alanine + ATP = D-alanyl-D-alanine + ADP + phosphate + H(+). The protein operates within cell wall biogenesis; peptidoglycan biosynthesis. In terms of biological role, cell wall formation. The sequence is that of D-alanine--D-alanine ligase from Thermotoga maritima (strain ATCC 43589 / DSM 3109 / JCM 10099 / NBRC 100826 / MSB8).